The following is a 35-amino-acid chain: Sperm protamine alpha isoform 1 (35 aa).

A disordered region spans residues 1 to 35 (MPRRRRRASRPVRRRRRARRSTAVRRRRRVVRRRR). Phosphoserine occurs at positions 9 and 21.

Phosphorylated in immature sperm. Dephosphorylated in mature sperm allowing a stronger interaction with DNA. In terms of tissue distribution, gonads.

Its subcellular location is the nucleus. The protein localises to the chromosome. In terms of biological role, protamines substitute for histones in the chromatin of sperm during the haploid phase of spermatogenesis. They compact sperm DNA into a highly condensed, stable and inactive complex. The sequence is that of Sperm protamine alpha isoform 1 from Scomber scombrus (Atlantic mackerel).